Consider the following 402-residue polypeptide: Bone morphogenetic protein 8A (402 aa).

The signal sequence occupies residues 1 to 19; the sequence is MAARPGPLWLLGLTLCALG. A propeptide spanning residues 20–263 is cleaved from the precursor; sequence GGGPGLRPPP…ASPSPIRTPR (244 aa). N-linked (GlcNAc...) asparagine glycosylation is found at N158 and N343. Cystine bridges form between C301/C367, C330/C399, and C334/C401.

The protein belongs to the TGF-beta family. Homodimer; disulfide-linked.

It localises to the secreted. In terms of biological role, induces cartilage and bone formation. May be the osteoinductive factor responsible for the phenomenon of epithelial osteogenesis. Plays a role in calcium regulation and bone homeostasis. Signaling protein involved in regulation of thermogenesis and energy balance. Proposed to increase the peripheral response of brown adipose tissue (BAT) to adrenergic stimulation while acting centrally in the hypothalamus to increase sympathetic output to BAT. Functionally, growth factor of the TGF-beta superfamily that plays important role in various biological processes, including spermatogenesis, osteogenesis, steroidogenesis as well as regulation of energy balance. Initiates the canonical BMP signaling cascade by associating with type I receptor BMPR1A and type II receptor BMPR2. Once all three components are bound together in a complex at the cell surface, BMPR2 phosphorylates and activates BMPR1A. In turn, BMPR1A propagates signal by phosphorylating SMAD1/5/8 that travel to the nucleus and act as activators and repressors of transcription of target genes. In addition, activates the SMAD2/3 pathway. In Homo sapiens (Human), this protein is Bone morphogenetic protein 8A (BMP8A).